The following is a 1704-amino-acid chain: ABC transporter ced-7 (1704 aa).

Residues 23 to 43 traverse the membrane as a helical segment; the sequence is VWTLFELIIPCLLLGPLVYLV. N-linked (GlcNAc...) asparagine glycans are attached at residues Asn-126 and Asn-145. Helical transmembrane passes span 256-276, 306-326, and 334-354; these read AFIDFFPFIWAFVTFINVIHI, VVMAFLKFFVIFLCSIIPLTF, and AALIVTVLMYGLGAVIFGAFV. Residue Asn-359 is glycosylated (N-linked (GlcNAc...) asparagine). A run of 2 helical transmembrane segments spans residues 362–382 and 389–409; these read NSAIKAILVAWGAMIGISYKL and ISSCFLYGLNINGAFALAVEA. N-linked (GlcNAc...) asparagine glycosylation is found at Asn-421 and Asn-427. Residues 436–456 form a helical membrane-spanning segment; it reads GWALVMMIVDILWMSIGALVV. A glycan (N-linked (GlcNAc...) asparagine) is linked at Asn-481. The interval 511–536 is disordered; it reads NPMASTSLNPPNADSDSLLEGSTEAD. Residues 512-525 are compositionally biased toward polar residues; sequence PMASTSLNPPNADS. Residues 546 to 777 enclose the ABC transporter 1 domain; sequence IIVRNLVKIW…FGTGYLLTVV (232 aa). Position 580-587 (580-587) interacts with ATP; it reads GHNGAGKS. N-linked (GlcNAc...) asparagine glycosylation is found at Asn-678, Asn-727, and Asn-899. 2 stretches are compositionally biased toward polar residues: residues 888-902 and 911-921; these read RQNSRISHNSRNASE and DTQSSTKSADS. The disordered stretch occupies residues 888-933; that stretch reads RQNSRISHNSRNASEPSLKPAGYDTQSSTKSADSYQKLMDSQARGP. The chain crosses the membrane as a helical span at residues 963 to 983; the sequence is LFTQVLIPIILLGLVGSLTTL. Residues Asn-986, Asn-1012, and Asn-1045 are each glycosylated (N-linked (GlcNAc...) asparagine). A run of 7 helical transmembrane segments spans residues 1126–1146, 1153–1173, 1176–1196, 1201–1221, 1234–1254, 1266–1286, and 1311–1331; these read LAPMLILIFAMVTSTFVMFLI, FAHQQFLTGISPITFYSASLI, GILYSLICLIFLFMFLAFHWM, AIVILFWFLYFFSSVPFIYAV, LLIIWQVVISGAALLAVFLIF, ILVNIFMFLLPSYAFGSAIIT, and LMGTFGVCSFALFVLLQFKFV. The ABC transporter 2 domain maps to 1379–1603; sequence LVIKDLTKTF…YGNNYTMTLS (225 aa). 1411–1418 is a binding site for ATP; sequence GVNGAGKT. N-linked (GlcNAc...) asparagine glycosylation is found at Asn-1597 and Asn-1632.

This sequence belongs to the ABC transporter superfamily. ABCA family. As to expression, ubiquitous in embryos. Expressed in larval germline precursors. Expression in larvae and adults is seen in amphid sheath cells, pharyngeal-intestinal valve and phasmid sheath cells. Low levels of expression are also seen in gonadal sheath cells.

Its subcellular location is the membrane. In terms of biological role, functions in the engulfment of cell corpses during embryonic programmed cell death to translocate molecules that mediate homotypic adhesion between cell surfaces of the dying and engulfing cells. This Caenorhabditis elegans protein is ABC transporter ced-7 (ced-7).